A 691-amino-acid chain; its full sequence is DNA ligase (691 aa).

Residues 41-45 (DAEYD), 90-91 (SL), and E130 contribute to the NAD(+) site. The N6-AMP-lysine intermediate role is filled by K132. Residues R153, E190, K307, and K331 each contribute to the NAD(+) site. Zn(2+) contacts are provided by C425, C428, C443, and C449. In terms of domain architecture, BRCT spans 610–691 (APQGVLAGKT…MHTLLEGHAR (82 aa)).

The protein belongs to the NAD-dependent DNA ligase family. LigA subfamily. Requires Mg(2+) as cofactor. The cofactor is Mn(2+).

The enzyme catalyses NAD(+) + (deoxyribonucleotide)n-3'-hydroxyl + 5'-phospho-(deoxyribonucleotide)m = (deoxyribonucleotide)n+m + AMP + beta-nicotinamide D-nucleotide.. Its function is as follows. DNA ligase that catalyzes the formation of phosphodiester linkages between 5'-phosphoryl and 3'-hydroxyl groups in double-stranded DNA using NAD as a coenzyme and as the energy source for the reaction. It is essential for DNA replication and repair of damaged DNA. The sequence is that of DNA ligase from Burkholderia pseudomallei (strain 1710b).